Here is a 391-residue protein sequence, read N- to C-terminus: Formate-dependent phosphoribosylglycinamide formyltransferase (391 aa).

Residues 20–21 (EL) and Glu80 each bind N(1)-(5-phospho-beta-D-ribosyl)glycinamide. Residues Arg112, Lys153, 158 to 163 (SSGKGQ), 193 to 196 (EGFV), and Glu201 contribute to the ATP site. Positions 117-306 (RLAAEELQLP…EFALHVRAFT (190 aa)) constitute an ATP-grasp domain. Mg(2+) contacts are provided by Glu265 and Glu277. Residues Asp284, Lys354, and 361 to 362 (RR) each bind N(1)-(5-phospho-beta-D-ribosyl)glycinamide.

The protein belongs to the PurK/PurT family. In terms of assembly, homodimer.

The catalysed reaction is N(1)-(5-phospho-beta-D-ribosyl)glycinamide + formate + ATP = N(2)-formyl-N(1)-(5-phospho-beta-D-ribosyl)glycinamide + ADP + phosphate + H(+). The protein operates within purine metabolism; IMP biosynthesis via de novo pathway; N(2)-formyl-N(1)-(5-phospho-D-ribosyl)glycinamide from N(1)-(5-phospho-D-ribosyl)glycinamide (formate route): step 1/1. In terms of biological role, involved in the de novo purine biosynthesis. Catalyzes the transfer of formate to 5-phospho-ribosyl-glycinamide (GAR), producing 5-phospho-ribosyl-N-formylglycinamide (FGAR). Formate is provided by PurU via hydrolysis of 10-formyl-tetrahydrofolate. In Aliivibrio fischeri (strain ATCC 700601 / ES114) (Vibrio fischeri), this protein is Formate-dependent phosphoribosylglycinamide formyltransferase.